The following is a 135-amino-acid chain: MRDPKVIQAEIAKLEAELEDVKYHEAKTRSAVHILKNLGWTWTRQTGWKKPEVTKLSHKVFDKDTMTHIKAGDWVKVDMGVVGGYGYVRSVSGKYAQVSYITGVTPRGAIVADKTNMIHTGFLTVVSYEEIVKSR.

The polypeptide is Protein 4.7 (Escherichia coli (Bacteriophage T7)).